The sequence spans 373 residues: 3 beta-hydroxysteroid dehydrogenase/Delta 5--&gt;4-isomerase type 1 (373 aa).

Residues 10–15, Tyr-155, and Lys-159 contribute to the NADP(+) site; that span reads GAGGFL. Residue Lys-159 is the Proton donor of the active site. Residues 288-308 traverse the membrane as a helical segment; that stretch reads LALMYWIGFLLEVVSFLLSPV.

This sequence belongs to the 3-beta-HSD family. In terms of tissue distribution, adrenal glands, testes and ovaries.

It is found in the endoplasmic reticulum membrane. The protein localises to the mitochondrion membrane. The catalysed reaction is a 3beta-hydroxy-Delta(5)-steroid + NAD(+) = a 3-oxo-Delta(5)-steroid + NADH + H(+). It catalyses the reaction pregnenolone + NAD(+) = pregn-5-ene-3,20-dione + NADH + H(+). The enzyme catalyses 3beta-hydroxyandrost-5-en-17-one + NAD(+) = androst-5-ene-3,17-dione + NADH + H(+). It carries out the reaction androst-5-en-3beta,17beta-diol + NAD(+) = 17beta-hydroxy-androst-5-en-3-one + NADH + H(+). The catalysed reaction is a 3beta-hydroxysteroid + NADP(+) = a 3-oxosteroid + NADPH + H(+). It catalyses the reaction 5alpha-androstane-3beta,17beta-diol + NADP(+) = 17beta-hydroxy-5alpha-androstan-3-one + NADPH + H(+). The enzyme catalyses 3beta-hydroxy-5alpha-androstan-17-one + NADP(+) = 5alpha-androstan-3,17-dione + NADPH + H(+). It carries out the reaction a 3-oxo-Delta(5)-steroid = a 3-oxo-Delta(4)-steroid. The catalysed reaction is pregn-5-ene-3,20-dione = progesterone. It catalyses the reaction androst-5-ene-3,17-dione = androst-4-ene-3,17-dione. The enzyme catalyses 17beta-hydroxy-androst-5-en-3-one = testosterone. It carries out the reaction 5alpha-androstane-3beta,17beta-diol + NAD(+) = 17beta-hydroxy-5alpha-androstan-3-one + NADH + H(+). The protein operates within steroid hormone biosynthesis. It participates in steroid metabolism. Its function is as follows. A bifunctional enzyme responsible for the oxidation and isomerization of 3beta-hydroxy-Delta(5)-steroid precursors to 3-oxo-Delta(4)-steroids, an essential step in steroid hormone biosynthesis. Specifically catalyzes the conversion of pregnenolone to progesterone, 17alpha-hydroxypregnenolone to 17alpha-hydroxyprogesterone, dehydroepiandrosterone (DHEA) to 4-androstenedione and androstenediol to testosterone. Additionally, catalyzes the interconversion between 3beta-hydroxy and 3-oxo-5alpha-androstane steroids controlling the bioavalability of the active forms. Specifically converts dihydrotestosterone to its inactive form 5alpha-androstanediol, that does not bind androgen receptor/AR. Also converts androstanedione, a precursor of testosterone and estrone, to epiandrosterone. Expected to use NAD(+) as preferred electron donor for the 3beta-hydroxy-steroid dehydrogenase activity and NADPH for the 3-ketosteroid reductase activity. This is 3 beta-hydroxysteroid dehydrogenase/Delta 5--&gt;4-isomerase type 1 (HSD3B1) from Macaca mulatta (Rhesus macaque).